The primary structure comprises 428 residues: E3 ubiquitin-protein ligase RNF128 (428 aa).

The first 38 residues, 1–38 (MGPPPGAGVSCRGGCGFSRLLAWCFLLALSPQAPGSRG), serve as a signal peptide directing secretion. Residues Asn-48, Asn-59, and Asn-101 are each glycosylated (N-linked (GlcNAc...) asparagine). The PA domain occupies 75-183 (SPLEPVAGVL…LKGTKILQSI (109 aa)). A helical transmembrane segment spans residues 208 to 228 (IFFVSVSFFIITAATVGYFIF). The RING-type; atypical zinc-finger motif lies at 277-318 (CAVCIELYKPNDLVRILTCNHIFHKTCVDPWLLEHRTCPMCK). Residues 346–428 (ISNSASSHEE…QETAVREIKS (83 aa)) form a disordered region. The span at 360 to 371 (ETASSGYASVQG) shows a compositional bias: polar residues.

Post-translationally, auto-ubiquitinated. Controls the development of T-cell clonal anergy by ubiquitination.

The protein resides in the cytoplasm. Its subcellular location is the endomembrane system. It localises to the cytoskeleton. It is found in the perinuclear region. The enzyme catalyses S-ubiquitinyl-[E2 ubiquitin-conjugating enzyme]-L-cysteine + [acceptor protein]-L-lysine = [E2 ubiquitin-conjugating enzyme]-L-cysteine + N(6)-ubiquitinyl-[acceptor protein]-L-lysine.. It participates in protein modification; protein ubiquitination. Its function is as follows. E3 ubiquitin-protein ligase that catalyzes 'Lys-27', 'Lys-48'- or 'Lys-63'-linked polyubiquitin chains formation and plays a role in different biological processes such as modulation of immune response, cytoskeletal dynamics or protein homeostasis. Inhibits IL2 and IL4 transcription, thereby playing an important role in the induction of the anergic phenotype, a long-term stable state of T-lymphocyte unresponsiveness to antigenic stimulation associated with the blockade of interleukin production. Ubiquitinates ARPC5 with 'Lys-48' linkages and COR1A with 'Lys-63' linkages leading to their degradation, down-regulation of these cytoskeletal components results in impaired lamellipodium formation and reduced accumulation of F-actin at the immunological synapse. Functions in the patterning of the dorsal ectoderm; sensitizes ectoderm to respond to neural-inducing signals. Plays a positive role in innate immune response by promoting 'Lys-63'-linked ubiquitination of TBK1 after RNA- or DNA-virus infection. Regulates alveolar macrophage activation and neutrophil infiltration by interacting with TLR4, targeting it for degradation, and inhibiting NF-kappa-B activation, hence decreasing pro-inflammatory cytokines. Negatively regulates the IL-3/STAT5 signaling pathway by facilitating 'Lys-27'-linked polyubiquitination of IL3RA leading to its degradation via lysosomal pathway. Directly regulates the N-glycosylation process in the endoplasmic reticulum by targeting the glycosyl-transferase RPN1 for ubiquitination and degradation. Other substrates targeted for degradation by RNF128 include transmembrane proteins CD40L, CD83 or the tetraspanin CD151. The polypeptide is E3 ubiquitin-protein ligase RNF128 (RNF128) (Homo sapiens (Human)).